The following is a 92-amino-acid chain: Small ribosomal subunit protein uS19c (92 aa).

It belongs to the universal ribosomal protein uS19 family.

The protein localises to the plastid. Its subcellular location is the chloroplast. Its function is as follows. Protein S19 forms a complex with S13 that binds strongly to the 16S ribosomal RNA. In Nasturtium officinale (Watercress), this protein is Small ribosomal subunit protein uS19c.